We begin with the raw amino-acid sequence, 566 residues long: E3 ubiquitin-protein ligase Rnf220 (566 aa).

Lys277 is covalently cross-linked (Glycyl lysine isopeptide (Lys-Gly) (interchain with G-Cter in SUMO2)). Residues 277 to 300 (KREGDSPTASPHSSATEDLHHSDR) form a disordered region. The span at 291 to 300 (ATEDLHHSDR) shows a compositional bias: basic and acidic residues. Ser390 bears the Phosphoserine mark. Residues 485–513 (EESAVTTFEALKARVRELERQLSRGDRYK) are a coiled coil. The segment at 514 to 522 (CLICMDSYS) is required for targeting to the cytoplasm. The RING-type zinc-finger motif lies at 514–553 (CLICMDSYSMPLTSIQCWHVHCEECWLRTLGAKKLCPQCN).

In terms of assembly, interacts with SIN3B. Interacts with CTNNB1 (via Armadillo repeats 2-8). Interacts with USP7 (via MATH domain). Post-translationally, auto-ubiquitinated; leads to proteasomal degradation. In terms of tissue distribution, in the brain, expressed in the hippocampus, telenecephalon and cerebellum. No expression in astro glial cells or in neural progenitor cells.

The protein resides in the cytoplasm. Its subcellular location is the nucleus. It carries out the reaction S-ubiquitinyl-[E2 ubiquitin-conjugating enzyme]-L-cysteine + [acceptor protein]-L-lysine = [E2 ubiquitin-conjugating enzyme]-L-cysteine + N(6)-ubiquitinyl-[acceptor protein]-L-lysine.. The protein operates within protein modification; protein ubiquitination. In terms of biological role, E3 ubiquitin-protein ligase that promotes the ubiquitination and proteasomal degradation of SIN3B. Independently of its E3 ligase activity, acts as a CTNNB1 stabilizer through USP7-mediated deubiquitination of CTNNB1 and promotes Wnt signaling. Plays a critical role in the regulation of nuclear lamina. The sequence is that of E3 ubiquitin-protein ligase Rnf220 (Rnf220) from Mus musculus (Mouse).